A 24-amino-acid polypeptide reads, in one-letter code: Coenzyme PQQ synthesis protein A (24 aa).

Residues Glu16 to Tyr20 constitute a cross-link (pyrroloquinoline quinone (Glu-Tyr)).

The protein belongs to the PqqA family.

Its pathway is cofactor biosynthesis; pyrroloquinoline quinone biosynthesis. Required for coenzyme pyrroloquinoline quinone (PQQ) biosynthesis. PQQ is probably formed by cross-linking a specific glutamate to a specific tyrosine residue and excising these residues from the peptide. This chain is Coenzyme PQQ synthesis protein A, found in Acinetobacter baumannii (strain SDF).